The chain runs to 283 residues: MADRGPWRVGVVGYGRLGQSLVSRLLAQGPELGLELVFVWNRDPGRMAGSVPPSLQLQNLAALGERRPDLVVEVAHPKIIHESGAQILRHANLLVGSPSALSDQTTERQLLEASQHWDHAVFVARGALWGAEDIRRLDAAGGLRSLRVTMATHPDGFRLEGPLAAAHSPGPCTVLYEGPVRGLCPFAPRNSNTMAAAALAAPSLGFDGVIGVLVADTSLTDMHVVDVELSGPRGPTGRSFAVHTRRENPAEPGAVTGSATVTAFWQSLLACCQLPSRPGIHLC.

S20 and S168 each carry phosphoserine.

This sequence belongs to the L-aspartate dehydrogenase family.

This chain is Aspartate dehydrogenase domain-containing protein, found in Homo sapiens (Human).